The sequence spans 336 residues: Glycerol-3-phosphate dehydrogenase [NAD(P)+] (336 aa).

NADPH contacts are provided by serine 11, tryptophan 12, arginine 32, and lysine 106. Sn-glycerol 3-phosphate is bound by residues lysine 106 and glycine 136. Position 140 (alanine 140) interacts with NADPH. Positions 191, 244, 254, 255, and 256 each coordinate sn-glycerol 3-phosphate. Lysine 191 acts as the Proton acceptor in catalysis. Arginine 255 is a binding site for NADPH. NADPH is bound by residues valine 279 and glutamate 281.

It belongs to the NAD-dependent glycerol-3-phosphate dehydrogenase family.

The protein resides in the cytoplasm. It catalyses the reaction sn-glycerol 3-phosphate + NAD(+) = dihydroxyacetone phosphate + NADH + H(+). The enzyme catalyses sn-glycerol 3-phosphate + NADP(+) = dihydroxyacetone phosphate + NADPH + H(+). The protein operates within membrane lipid metabolism; glycerophospholipid metabolism. Its function is as follows. Catalyzes the reduction of the glycolytic intermediate dihydroxyacetone phosphate (DHAP) to sn-glycerol 3-phosphate (G3P), the key precursor for phospholipid synthesis. This Frankia casuarinae (strain DSM 45818 / CECT 9043 / HFP020203 / CcI3) protein is Glycerol-3-phosphate dehydrogenase [NAD(P)+].